We begin with the raw amino-acid sequence, 425 residues long: Probable proline--tRNA ligase, mitochondrial (425 aa).

This sequence belongs to the class-II aminoacyl-tRNA synthetase family.

It localises to the mitochondrion. The enzyme catalyses tRNA(Pro) + L-proline + ATP = L-prolyl-tRNA(Pro) + AMP + diphosphate. The polypeptide is Probable proline--tRNA ligase, mitochondrial (Schizosaccharomyces pombe (strain 972 / ATCC 24843) (Fission yeast)).